A 197-amino-acid polypeptide reads, in one-letter code: Recombination protein RecR (197 aa).

The segment at 57-72 (CSRCGYLTDFDPCLIC) adopts a C4-type zinc-finger fold. The region spanning 80-174 (SLICIGEESS…KVTRLAHGLP (95 aa)) is the Toprim domain.

It belongs to the RecR family.

Its function is as follows. May play a role in DNA repair. It seems to be involved in an RecBC-independent recombinational process of DNA repair. It may act with RecF and RecO. This chain is Recombination protein RecR, found in Syntrophomonas wolfei subsp. wolfei (strain DSM 2245B / Goettingen).